The chain runs to 274 residues: 2,3,4,5-tetrahydropyridine-2,6-dicarboxylate N-succinyltransferase (274 aa).

Positions 103 and 140 each coordinate substrate.

Belongs to the transferase hexapeptide repeat family. Homotrimer.

The protein localises to the cytoplasm. It catalyses the reaction (S)-2,3,4,5-tetrahydrodipicolinate + succinyl-CoA + H2O = (S)-2-succinylamino-6-oxoheptanedioate + CoA. It participates in amino-acid biosynthesis; L-lysine biosynthesis via DAP pathway; LL-2,6-diaminopimelate from (S)-tetrahydrodipicolinate (succinylase route): step 1/3. In Haemophilus ducreyi (strain 35000HP / ATCC 700724), this protein is 2,3,4,5-tetrahydropyridine-2,6-dicarboxylate N-succinyltransferase.